A 637-amino-acid polypeptide reads, in one-letter code: Serine/threonine-protein kinase Nek11 (637 aa).

Positions 29-287 (YVLQQKLGSG…AIEILKIPYI (259 aa)) constitute a Protein kinase domain. Residues 35–43 (LGSGSFGTV) and lysine 61 each bind ATP. The Proton acceptor role is filled by aspartate 158. A Phosphoserine; by CHEK1 modification is found at serine 273. Residues 302–385 (TLEDKNLDCQ…QELRSRNFQQ (84 aa)) adopt a coiled-coil conformation. Positions 399–446 (GMEEKEEQPEGRPSCSPQDEDEERWQDREEEFDEPTLENLSEPQPIPS) are disordered. A compositionally biased stretch (acidic residues) spans 416 to 434 (QDEDEERWQDREEEFDEPT).

It belongs to the protein kinase superfamily. NEK Ser/Thr protein kinase family. NIMA subfamily. Interacts with NEK2. Requires Mn(2+) as cofactor. Mg(2+) is required as a cofactor. Phosphorylated by NEK2. Phosphorylation at Ser-273 is important for its activation.

Its subcellular location is the nucleus. It is found in the nucleolus. The enzyme catalyses L-seryl-[protein] + ATP = O-phospho-L-seryl-[protein] + ADP + H(+). It catalyses the reaction L-threonyl-[protein] + ATP = O-phospho-L-threonyl-[protein] + ADP + H(+). Its activity is regulated as follows. Autorepressed by intramolecular binding of the C-terminus which dissociates following phosphorylation by NEK2. Activated in response to DNA damage. Inhibited by zinc. Its function is as follows. Protein kinase which plays an important role in the G2/M checkpoint response to DNA damage. Controls degradation of CDC25A by directly phosphorylating it on residues whose phosphorylation is required for BTRC-mediated polyubiquitination and degradation. In Macaca fascicularis (Crab-eating macaque), this protein is Serine/threonine-protein kinase Nek11 (NEK11).